The primary structure comprises 126 residues: MFS14 protein (126 aa).

A signal peptide (or 24, or 26) is located at residues 1 to 23 (MALEAATAPRALLAACLVLLVLG).

Enhanced expression in male flowers. Accumulates in the tapetum.

This is MFS14 protein (MFS14) from Zea mays (Maize).